A 384-amino-acid chain; its full sequence is Cell division protein FtsZ (384 aa).

GTP is bound by residues 20–24 (GGGSN), 107–109 (GTG), glutamate 138, arginine 142, and asparagine 186.

Belongs to the FtsZ family. In terms of assembly, homodimer. Polymerizes to form a dynamic ring structure in a strictly GTP-dependent manner. Interacts directly with several other division proteins.

It localises to the cytoplasm. In terms of biological role, essential cell division protein that forms a contractile ring structure (Z ring) at the future cell division site. The regulation of the ring assembly controls the timing and the location of cell division. One of the functions of the FtsZ ring is to recruit other cell division proteins to the septum to produce a new cell wall between the dividing cells. Binds GTP and shows GTPase activity. In Buchnera aphidicola subsp. Acyrthosiphon pisum (strain APS) (Acyrthosiphon pisum symbiotic bacterium), this protein is Cell division protein FtsZ.